Here is an 86-residue protein sequence, read N- to C-terminus: Omega-theraphotoxin-Hhn1f 3 (86 aa).

The signal sequence occupies residues 1–21; that stretch reads MKSIVFVALFGLALLAVACSA. Positions 22 to 50 are excised as a propeptide; it reads SEDAHKELLKEVVRAMVVDKTDAVQAEER. Cystine bridges form between C52–C66, C59–C71, and C65–C78.

Belongs to the neurotoxin 10 (Hwtx-1) family. 17 (Hntx-9) subfamily. As to expression, expressed by the venom gland.

The protein localises to the secreted. Its function is as follows. Ion channel inhibitor. In Cyriopagopus hainanus (Chinese bird spider), this protein is Omega-theraphotoxin-Hhn1f 3.